Here is a 67-residue protein sequence, read N- to C-terminus: Neurotoxin Os3 (67 aa).

An LCN-type CS-alpha/beta domain is found at 3 to 67 (RDGYIAQPHN…GVIVDGEKCH (65 aa)). 4 cysteine pairs are disulfide-bonded: C13/C66, C17/C39, C24/C48, and C28/C50.

It belongs to the long (4 C-C) scorpion toxin superfamily. Sodium channel inhibitor family. Alpha subfamily. In terms of tissue distribution, expressed by the venom gland.

The protein localises to the secreted. Binds to sodium channels (Nav) and inhibits the inactivation of the activated channels, thereby blocking neuronal transmission. The sequence is that of Neurotoxin Os3 from Orthochirus scrobiculosus (Central Asian scorpion).